The sequence spans 596 residues: Glomulin (596 aa).

An N-acetylalanine modification is found at Ala2. An alpha-helical region with structural similarity to HEAT repeats region spans residues 2–555 (AVEELQSIIK…EEIPSMPPEM (554 aa)). Positions 299-596 (IDQLPMVLSP…STSEENVGIK (298 aa)) are important for interaction with RBX1.

In terms of assembly, interacts with FKBP4 and FKBP1A. Interacts with RBX1 (via RING domain). Identified in complexes that contain RBX1 plus one of the cullins CUL1, CUL2, CUL3, and CUL4A. Identified in a SCF complex composed of CUL1, RBX1, SKP1, FBXW7 and GLMN. Component of a SCF-like complex consisting of CUL7, RBX1, SKP1, FBXW8 and GLMN. Interacts with unphosphorylated MET and is released upon MET phosphorylation. Phosphorylated on tyrosine residues. As to expression, ubiquitous. Detected in embryonic vasculature and embryonic perichondrium, and in adult eye, brain, heart, testis, kidney, smooth muscle and skeletal muscle.

Functionally, regulatory component of cullin-RING-based SCF (SKP1-Cullin-F-box protein) E3 ubiquitin-protein ligase complexes. Inhibits E3 ubiquitin ligase activity by binding to the RING domain of RBX1 and inhibiting its interaction with the E2 ubiquitin-conjugating enzyme CDC34. Inhibits RBX1-mediated neddylation of CUL1. Required for normal stability and normal cellular levels of key components of SCF ubiquitin ligase complexes, including FBXW7, RBX1, CUL1, CUL2, CUL3, CUL4A, and thereby contributes to the regulation of CCNE1 and MYC levels. Essential for normal development of the vasculature. Contributes to the regulation of RPS6KB1 phosphorylation. The sequence is that of Glomulin (Glmn) from Mus musculus (Mouse).